Reading from the N-terminus, the 225-residue chain is Mitochondrial inner membrane protease ATP23 (225 aa).

H124 contributes to the a divalent metal cation binding site. E125 is a catalytic residue. H128 is an a divalent metal cation binding site.

This sequence belongs to the peptidase M76 family.

The protein localises to the mitochondrion inner membrane. Its function is as follows. Has a dual role in the assembly of mitochondrial ATPase. Acts as a protease that removes N-terminal residues of mitochondrial ATPase CF(0) subunit 6 at the intermembrane space side. Also involved in the correct assembly of the membrane-embedded ATPase CF(0) particle, probably mediating association of subunit 6 with the subunit 9 ring. This Candida glabrata (strain ATCC 2001 / BCRC 20586 / JCM 3761 / NBRC 0622 / NRRL Y-65 / CBS 138) (Yeast) protein is Mitochondrial inner membrane protease ATP23 (ATP23).